Reading from the N-terminus, the 75-residue chain is MPITSKYTDEQVESILTEIGAVLDKHGATPELSLMIAGNIATNVLNQQVAASQRKLIAEKFAQALISSLQEPKTH.

It belongs to the UPF0352 family.

In Vibrio vulnificus (strain YJ016), this protein is UPF0352 protein VV1166.